The following is a 134-amino-acid chain: uncharacterized protein (134 aa).

The next 3 membrane-spanning stretches (helical) occupy residues F5–F25, L30–I50, and L62–L82.

The protein belongs to the bacteriophage holin family. Cp-1 holin subfamily.

It is found in the cell membrane. This is an uncharacterized protein from Bacillus subtilis (strain 168).